We begin with the raw amino-acid sequence, 313 residues long: Glyoxylate/hydroxypyruvate reductase A HPR2 (313 aa).

NADP(+) is bound by residues 152–155, 174–176, 230–232, and Asp-256; these read LGRI, SRT, and IGR. Residue Arg-232 is part of the active site. The active site involves Glu-261. Residue His-279 is the Proton donor of the active site. 279–281 contacts NADP(+); that stretch reads HVG.

This sequence belongs to the D-isomer specific 2-hydroxyacid dehydrogenase family. GyaR subfamily. In terms of assembly, homodimer.

Its subcellular location is the cytoplasm. It catalyses the reaction glycolate + NADP(+) = glyoxylate + NADPH + H(+). The enzyme catalyses (R)-glycerate + NAD(+) = 3-hydroxypyruvate + NADH + H(+). The catalysed reaction is (R)-glycerate + NADP(+) = 3-hydroxypyruvate + NADPH + H(+). With respect to regulation, strongly inhibited by oxalate. Functionally, catalyzes the NADPH-dependent reduction of glyoxylate and hydroxypyruvate (HP) into glycolate and glycerate in the cytoplasm, thus providing a cytosolic bypass to the photorespiratory core cycle. Mostly active in the presence of NADPH and hydroxypyruvate. The chain is Glyoxylate/hydroxypyruvate reductase A HPR2 (HPR2) from Arabidopsis thaliana (Mouse-ear cress).